The chain runs to 908 residues: MGVNDLWQILEPVKQHIHLQDLSGKTIAVDLSLWVCEAQTVKKMIGTVKKPHLRNLFFRISYLTQMNVKLVFVMEGEPPMLKADVISKRTQTRYGPSGKSRSQKTGRSHFKSVLRECLEMLECLGMPWVQAAGEAEAMCAYLNASGHVDGCLTNDGDAFLYGAQTVYRNFTMNTKDPHVDCYTISSIKSKLGLDRDALVGLAVLLGCDYLPKGVPGVGKEQALKLLQIFKGQSLLQRFNQWIEDPCYSVPQSAPKKVVHCSVCSHPGSPKDHERNGCILCKSDKYCEPHDYDYLCPCEWHQTDHNRHLSEIENNIKKKACSCEGFPFHEVIQEFLLNKNKMLKPITYQRPDLLLFQRFTVQKMEWPSHYACEKLLVLLTRYDMIERKHGRKTSNQLQPIRIVKPRVRNGVHCLEIEWEKPEHYVVEDGDPGKLSLLTMEEASLFEAAYPDAVAVYQKQLSETKGRKQKSMKNKPKGSHLPEADDVINSQSLMTLKPTSKAFPKQNPKINLENSPDPILAQESTSPSLNSFVSPENAPCLNLQEQLVPSPRTLAIKQSKDVSHFLVSECSQPSSSSHDISVITDLQLSTIDWAGTSFSNSPAVQRNTFSQDLASESESSAILPDFEQLSYESEQGTSDSEGSGRDLQQSNPEEQLLSGISALHLHDLPLKERIRIKSSCPQYNVGADAGLESLPLKLKGSCIAYSSSDGSSNFSKDLTGVYLHKESRNSKVLDSRLQENCGANTSLPYSFSDKAVKTSSLQVGLPTAAIPHNPRVAVKTTKNLVMKNSVCLERDSSDEDNAPGSWKSKYTAPEMKHSSQKHSLVHVRDSTHNKLRNPKVESKETKLCNESFKTAEDEENGFSDLGRSPQSFRPCHDKDENSTASWENPLPLRQRLKLRFQNTQSGFYNT.

The tract at residues 2–96 (GVNDLWQILE…SKRTQTRYGP (95 aa)) is XPG-N domain. Mg(2+) is bound by residues D30, E75, E134, E136, D155, D157, and D208. Positions 122-208 (ECLGMPWVQA…VGLAVLLGCD (87 aa)) are XPG-I domain. The segment at 208 to 383 (DYLPKGVPGV…LLVLLTRYDM (176 aa)) is 5'-3' exonuclease domain. The tract at residues 389-463 (GRKTSNQLQP…VYQKQLSETK (75 aa)) is chromodomain. Disordered regions lie at residues 460-482 (SETK…LPEA), 629-650 (YESE…QSNP), 792-834 (RDSS…NKLR), and 853-886 (AEDE…SWEN). Basic residues predominate over residues 465-476 (RKQKSMKNKPKG). A phosphoserine mark is found at S794 and S795. Over residues 824 to 834 (HVRDSTHNKLR) the composition is skewed to basic and acidic residues.

It belongs to the XPG/RAD2 endonuclease family. GEN subfamily. In terms of assembly, largely monomeric, dimerizes on the Holliday junction and the first nick occurs upon dimerization at the junction. It depends on Mg(2+) as a cofactor. Expressed in bone marrow and testis and to a lesser extent in thymus, spleen, brain and colon.

The protein resides in the nucleus. In terms of biological role, endonuclease which resolves Holliday junctions (HJs) by the introduction of symmetrically related cuts across the junction point, to produce nicked duplex products in which the nicks can be readily ligated. Four-way DNA intermediates, also known as Holliday junctions, are formed during homologous recombination and DNA repair, and their resolution is necessary for proper chromosome segregation. Cleaves HJs by a nick and counter-nick mechanism involving dual coordinated incisions that lead to the formation of ligatable nicked duplex products. Cleavage of the first strand is rate limiting, while second strand cleavage is rapid. Largely monomeric, dimerizes on the HJ and the first nick occurs upon dimerization at the junction. Efficiently cleaves both single and double HJs contained within large recombination intermediates. Exhibits a weak sequence preference for incision between two G residues that reside in a T-rich region of DNA. Also has endonuclease activity on 5'-flap and replication fork (RF) DNA substrates. This Mus musculus (Mouse) protein is Flap endonuclease GEN homolog 1 (Gen1).